The sequence spans 862 residues: Putative PIP5K1A and PSMD4-like protein (862 aa).

A PIPK domain is found at 28 to 396; that stretch reads TSSALKGAIQ…WFQRFMCNTV (369 aa). Disordered regions lie at residues 404–424 and 453–481; these read PSPS…GSSG and HLGC…PSFS. The segment covering 412–424 has biased composition (low complexity); it reads SGSSFSQRAGSSG. The VWFA domain maps to 490 to 673; that stretch reads MLTTSVDNSE…LADALISFPI (184 aa). One can recognise a UIM 1 domain in the interval 696–715; the sequence is SADPELALVLRVFMEEQRQR. The interval 716–740 is disordered; that stretch reads QEEEARQAAAASAAEAGIATTGTED. The segment covering 722 to 731 has biased composition (low complexity); sequence QAAAASAAEA. A UIM 2 domain is found at 766–783; that stretch reads MTEEEKIVCAMQMSLQGA. The disordered stretch occupies residues 826 to 862; sequence NLPGVDPNNEAIRNAVGSLASQATKDSKKDKKEEDKK. The span at 850 to 862 shows a compositional bias: basic and acidic residues; that stretch reads KDSKKDKKEEDKK.

In terms of tissue distribution, testis-specific.

It localises to the cytoplasm. In terms of biological role, has negligible PIP5 kinase activity. Binds to ubiquitinated proteins. In Homo sapiens (Human), this protein is Putative PIP5K1A and PSMD4-like protein (PIPSL).